Reading from the N-terminus, the 40-residue chain is Photosystem II reaction center protein J (40 aa).

Residues 8–28 traverse the membrane as a helical segment; sequence IPLWMIGTLAGILVISLIGIF.

The protein belongs to the PsbJ family. As to quaternary structure, PSII is composed of 1 copy each of membrane proteins PsbA, PsbB, PsbC, PsbD, PsbE, PsbF, PsbH, PsbI, PsbJ, PsbK, PsbL, PsbM, PsbT, PsbX, PsbY, PsbZ, Psb30/Ycf12, at least 3 peripheral proteins of the oxygen-evolving complex and a large number of cofactors. It forms dimeric complexes.

Its subcellular location is the plastid membrane. In terms of biological role, one of the components of the core complex of photosystem II (PSII). PSII is a light-driven water:plastoquinone oxidoreductase that uses light energy to abstract electrons from H(2)O, generating O(2) and a proton gradient subsequently used for ATP formation. It consists of a core antenna complex that captures photons, and an electron transfer chain that converts photonic excitation into a charge separation. This is Photosystem II reaction center protein J from Cuscuta gronovii (Common dodder).